We begin with the raw amino-acid sequence, 38 residues long: Antifungal protein 5 (38 aa).

This sequence belongs to the plant LTP family.

Its function is as follows. Possesses potent antifungal activity against F.graminearum but not P.infestans. The protein is Antifungal protein 5 of Malva parviflora (Little mallow).